The primary structure comprises 189 residues: Holliday junction branch migration complex subunit RuvA (189 aa).

Positions 1-63 (MIHALNGKVE…DDGISLYGFL (63 aa)) are domain I. The segment at 64 to 135 (EVIKLKLFEK…ELKDTIKELD (72 aa)) is domain II. The flexible linker stretch occupies residues 135–139 (DVSIN). The domain III stretch occupies residues 140–189 (EKDRKVLEAIEALVTLGFNRNQAKKAVNKVAAKDDKLDDIIKKALRFLSR).

It belongs to the RuvA family. As to quaternary structure, homotetramer. Forms an RuvA(8)-RuvB(12)-Holliday junction (HJ) complex. HJ DNA is sandwiched between 2 RuvA tetramers; dsDNA enters through RuvA and exits via RuvB. An RuvB hexamer assembles on each DNA strand where it exits the tetramer. Each RuvB hexamer is contacted by two RuvA subunits (via domain III) on 2 adjacent RuvB subunits; this complex drives branch migration. In the full resolvosome a probable DNA-RuvA(4)-RuvB(12)-RuvC(2) complex forms which resolves the HJ.

The protein localises to the cytoplasm. The RuvA-RuvB-RuvC complex processes Holliday junction (HJ) DNA during genetic recombination and DNA repair, while the RuvA-RuvB complex plays an important role in the rescue of blocked DNA replication forks via replication fork reversal (RFR). RuvA specifically binds to HJ cruciform DNA, conferring on it an open structure. The RuvB hexamer acts as an ATP-dependent pump, pulling dsDNA into and through the RuvAB complex. HJ branch migration allows RuvC to scan DNA until it finds its consensus sequence, where it cleaves and resolves the cruciform DNA. The chain is Holliday junction branch migration complex subunit RuvA from Thermosipho africanus (strain TCF52B).